The following is a 427-amino-acid chain: Enolase (427 aa).

Gln-163 provides a ligand contact to (2R)-2-phosphoglycerate. The active-site Proton donor is Glu-205. The Mg(2+) site is built by Asp-242, Glu-285, and Asp-312. (2R)-2-phosphoglycerate is bound by residues Lys-337, Arg-366, Ser-367, and Lys-388. Lys-337 functions as the Proton acceptor in the catalytic mechanism.

Belongs to the enolase family. Mg(2+) serves as cofactor.

It is found in the cytoplasm. It localises to the secreted. The protein resides in the cell surface. The catalysed reaction is (2R)-2-phosphoglycerate = phosphoenolpyruvate + H2O. It functions in the pathway carbohydrate degradation; glycolysis; pyruvate from D-glyceraldehyde 3-phosphate: step 4/5. Its function is as follows. Catalyzes the reversible conversion of 2-phosphoglycerate (2-PG) into phosphoenolpyruvate (PEP). It is essential for the degradation of carbohydrates via glycolysis. The sequence is that of Enolase from Rhodopseudomonas palustris (strain TIE-1).